We begin with the raw amino-acid sequence, 264 residues long: TLC domain-containing protein 2 (264 aa).

6 consecutive transmembrane segments (helical) span residues 3–23, 42–62, 77–97, 114–134, 169–189, and 199–219; these read PTGL…HWGL, LCVS…GLSL, WALV…ADLL, VVVS…FSMV, SLAT…LWLF, and LVTL…ILGI. A TLC domain is found at 34-227; sequence RDRWQWWNLC…GIRILVNDVL (194 aa). The segment at 230–264 is disordered; it reads RPHPPSPGHEKTRGTRTRRDNGPVTSNSSTLSLKD. Basic and acidic residues predominate over residues 237–250; sequence GHEKTRGTRTRRDN. Positions 252-264 are enriched in polar residues; it reads PVTSNSSTLSLKD.

It belongs to the TLCD family.

Its subcellular location is the cell membrane. Regulates the composition and fluidity of the plasma membrane. Inhibits the incorporation of membrane-fluidizing phospholipids containing omega-3 long-chain polyunsaturated fatty acids (LCPUFA) and thereby promotes membrane rigidity. Does not appear to have any effect on LCPUFA synthesis. The sequence is that of TLC domain-containing protein 2 (TLCD2) from Homo sapiens (Human).